The following is a 305-amino-acid chain: Ribosomal RNA small subunit methyltransferase H (305 aa).

S-adenosyl-L-methionine contacts are provided by residues 30–32 (GGH), aspartate 49, phenylalanine 74, aspartate 96, and glutamine 103.

The protein belongs to the methyltransferase superfamily. RsmH family.

The protein resides in the cytoplasm. It catalyses the reaction cytidine(1402) in 16S rRNA + S-adenosyl-L-methionine = N(4)-methylcytidine(1402) in 16S rRNA + S-adenosyl-L-homocysteine + H(+). In terms of biological role, specifically methylates the N4 position of cytidine in position 1402 (C1402) of 16S rRNA. The polypeptide is Ribosomal RNA small subunit methyltransferase H (Francisella tularensis subsp. tularensis (strain FSC 198)).